Here is a 599-residue protein sequence, read N- to C-terminus: MELPISFLSDSSRPAASSERGDQAALGRGELEFDEELVFLAAEGEGDPEEIEGPEVREQSELLCIIRQKEKDLVLAARLGKALLERNQDMSRRYEEMQREMTDKLEHLEQEKHELKRKLENREGEWEGRVSELESDVKLLQEELEKQQVNLREADREKLSVVQELSEQNQRLLEQLSRATEMERQLSQQVNVLQEEFREKSLSTSQHVSRLESLLAEIKMLSDRKRELEQQLSTIMEENEQLQGLVEELQDKELSLNQQNFGKDLQLRESQLEIEEMRLSYRQLEGKLEELREEKSLQHMNSTSTSLLSEIEQSIEAEEQEQEREQLRLQLWEAHCQVRSLCCQLRGNESADSAVSTDSSMDESSETSSAKDVPAGSLRTALSELKSLILSILETCDSASSRKCEDDGLEEQIKQTSEDSRALRELLQGEQMRMKQTFDELQELHKQVTLLSVEMNALKEERDRLLVLTQNDETQEQLMKAIKDRDEAISKKTAVELELAKCRIDLMSLNTQLLDAIQQKLNLSQQLEAWQDDMHRVIDQQLMDKHQKEWSQPAYSFSNSHHVKQCSKAAAMKHAERPGEESIGAEGRRLFSFLKKTKC.

A disordered region spans residues 1–27 (MELPISFLSDSSRPAASSERGDQAALG). Residues 76 to 80 (AARLG) carry the CC1 box motif. Residues 80 to 341 (GKALLERNQD…WEAHCQVRSL (262 aa)) are a coiled coil. Residues 352 to 375 (DSAVSTDSSMDESSETSSAKDVPA) are disordered. Residues 405–536 (EDDGLEEQIK…LEAWQDDMHR (132 aa)) are a coiled coil.

It belongs to the BICDR family. Part of a tripartite complex with dynein and dynactin, acts an adapter linking the dynein motor complex and dynactin. Interacts with KIF1C. Interacts with RAB6A and RAB6B; interaction is specific to Rab6.

The protein localises to the cytoplasm. It is found in the cytoskeleton. It localises to the microtubule organizing center. The protein resides in the centrosome. In terms of biological role, acts as an adapter protein linking the dynein motor complex to various cargos and converts dynein from a non-processive to a highly processive motor in the presence of dynactin. Facilitates the interaction between dynein and dynactin and activates dynein processivity (the ability to move along a microtubule for a long distance without falling off the track). Predominantly recruits 2 dyneins, which increases both the force and speed of the microtubule motor. Component of secretory vesicle machinery in developing neurons that acts as a regulator of neurite outgrowth. Regulates the secretory vesicle transport by controlling the accumulation of Rab6-containing secretory vesicles in the pericentrosomal region restricting anterograde secretory transport during the early phase of neuronal differentiation, thereby inhibiting neuritogenesis. This is BICD family-like cargo adapter 1 (bicdl1) from Xenopus tropicalis (Western clawed frog).